We begin with the raw amino-acid sequence, 654 residues long: MVLSDLDIKEPDSPESGLNGSDDMVREHETESKGNLYSQYEEKVRPCIDLIDSLRALGVEQDLALPAIAVIGDQSSGKSSVLEALSGVALPRGSGIVTRCPLVLRLKKLEKEGEWKGKVSFLDREIEISDASQVEKEISEAQIAIAGEGMGISHELISLEVSSPHVPDLTLIDLPGITRVAVGNQPHDIEYQIKSLIRKYILRQETINLVVVPANVDIATTEALRMAQDVDPQGDRTIGILTKPDLVDKGTEDKVVDVVRNLVFHLKKGYMIVKCRGQQEIQHRLSLDKALQRERIFFEDHTHFRDLLEEGRATIPCLAERLTNELIMHICKTLPLLENQIKETHQRITEELQKYGKDIPEEESEKMFSLIEKIDTFNKEIISTIEGEEHVGQYDSRLFTKVRAEFCKWSAVVEKNFEKGHEAIRKEIKQFENRYRGRELPGFVNYKTFEIIIKKQVIVLEEPAVDMLHTVTDIIRNTFTEVSGKHFSEFFNLHRTAKSKIEDIRLEQENEAEKSIRLHFQMEQLVYCQDQVYRRALQQVREKEAEEEKKKKSNHYYQSEDSEPSTAEIFQHLMAYHQEVSTRISSHIPLIIQFFVLRTYGEQLKKSMLQLLQDKDQYDWLLKERTDTRDKRKFLKERLERLSRARQRLAKFPG.

Position 1 is an N-acetylmethionine (Met-1). Composition is skewed to basic and acidic residues over residues 1-12 (MVLSDLDIKEPD) and 23-32 (DMVREHETES). Positions 1–33 (MVLSDLDIKEPDSPESGLNGSDDMVREHETESK) are disordered. A Dynamin-type G domain is found at 62–335 (DLALPAIAVI…LIMHICKTLP (274 aa)). The interval 72 to 79 (GDQSSGKS) is G1 motif. Residue 72–79 (GDQSSGKS) coordinates GTP. Positions 97 to 99 (VTR) are G2 motif. The G3 motif stretch occupies residues 173-176 (DLPG). GTP is bound by residues 173-177 (DLPGI) and 242-245 (TKPD). The tract at residues 242–245 (TKPD) is G4 motif. The G5 motif stretch occupies residues 274-277 (KCRG). Residues 336–361 (LLENQIKETHQRITEELQKYGKDIPE) are bundle signaling element (BSE). The interval 361 to 528 (EEESEKMFSL…HFQMEQLVYC (168 aa)) is middle domain. The tract at residues 362–624 (EESEKMFSLI…KDQYDWLLKE (263 aa)) is stalk. The disordered stretch occupies residues 544-563 (EAEEEKKKKSNHYYQSEDSE). A critical for lipid-binding region spans residues 549–552 (KKKK). Residues 566–654 (TAEIFQHLMA…ARQRLAKFPG (89 aa)) form the GED domain.

Belongs to the TRAFAC class dynamin-like GTPase superfamily. Dynamin/Fzo/YdjA family. As to quaternary structure, homooligomer. Oligomerizes into multimeric filamentous or ring-like structures by virtue of its stalk domain. Oligomerization is critical for GTPase activity, protein stability, and recognition of viral target structures. Interacts with TRPC1, TRPC3, TRPC4, TRPC5, TRPC6 and TRPC7. Interacts with HSPA5. Interacts with DDX39A and DDX39B. Interacts with TUBB/TUBB5. In terms of processing, ISGylated.

The protein resides in the cytoplasm. Its subcellular location is the endoplasmic reticulum membrane. It localises to the perinuclear region. In terms of biological role, interferon-induced dynamin-like GTPase with antiviral activity. The chain is Interferon-induced GTP-binding protein Mx1 (MX1) from Ovis aries (Sheep).